We begin with the raw amino-acid sequence, 460 residues long: Nitrogenase iron-iron protein beta chain (460 aa).

4 residues coordinate [8Fe-7S] cluster: C20, C45, C104, and S143.

It belongs to the NifD/NifK/NifE/NifN family. In terms of assembly, hexamer of two alpha, two beta, and two delta chains. It depends on [8Fe-7S] cluster as a cofactor.

It catalyses the reaction N2 + 8 reduced [2Fe-2S]-[ferredoxin] + 16 ATP + 16 H2O = H2 + 8 oxidized [2Fe-2S]-[ferredoxin] + 2 NH4(+) + 16 ADP + 16 phosphate + 6 H(+). This iron-iron protein is part of the nitrogenase complex that catalyzes the key enzymatic reactions in nitrogen fixation. Other nitrogenase complexes utilize a molybdenum-iron protein or a vanadium-iron protein. This Rhodobacter capsulatus (Rhodopseudomonas capsulata) protein is Nitrogenase iron-iron protein beta chain (anfK).